A 151-amino-acid polypeptide reads, in one-letter code: uncharacterized protein (151 aa).

Residues 35-147 adopt a coiled-coil conformation; the sequence is GIFENERQKL…RETLQESLED (113 aa).

This is an uncharacterized protein from Helicobacter hepaticus (strain ATCC 51449 / 3B1).